The following is an 87-amino-acid chain: Small ribosomal subunit protein bS20 (87 aa).

Over residues 1–11 the composition is skewed to basic residues; sequence MANIKSAKKRA. Residues 1–27 form a disordered region; it reads MANIKSAKKRAVQSEKRRQHNASQRSM.

The protein belongs to the bacterial ribosomal protein bS20 family.

Its function is as follows. Binds directly to 16S ribosomal RNA. In Actinobacillus succinogenes (strain ATCC 55618 / DSM 22257 / CCUG 43843 / 130Z), this protein is Small ribosomal subunit protein bS20.